Reading from the N-terminus, the 419-residue chain is Methylthioribose kinase (419 aa).

ATP-binding residues include Asn-49 and Lys-64. A substrate-binding site is contributed by Asp-239. An ATP-binding site is contributed by 256–258; that stretch reads DPE. Arg-365 is a binding site for substrate.

The protein belongs to the methylthioribose kinase family. As to quaternary structure, homodimer.

It carries out the reaction 5-(methylsulfanyl)-D-ribose + ATP = 5-(methylsulfanyl)-alpha-D-ribose 1-phosphate + ADP + H(+). The catalysed reaction is 5-deoxy-D-ribose + ATP = 5-deoxy-alpha-D-ribose 1-phosphate + ADP + H(+). It functions in the pathway amino-acid biosynthesis; L-methionine biosynthesis via salvage pathway; S-methyl-5-thio-alpha-D-ribose 1-phosphate from S-methyl-5'-thioadenosine (hydrolase route): step 2/2. Catalyzes the phosphorylation of methylthioribose into methylthioribose-1-phosphate. Also catalyzes the phosphorylation of 5-deoxyribose to 5-deoxyribose-1-phosphate. Part of a bifunctional DHAP-shunt salvage pathway for SAM by-products. The sequence is that of Methylthioribose kinase from Escherichia coli O45:K1 (strain S88 / ExPEC).